We begin with the raw amino-acid sequence, 336 residues long: tRNA N6-adenosine threonylcarbamoyltransferase (336 aa).

Fe cation is bound by residues histidine 114 and histidine 118. Substrate is bound by residues 136–140, aspartate 169, glycine 182, aspartate 186, and asparagine 275; that span reads LVSGG. Residue aspartate 302 coordinates Fe cation.

The protein belongs to the KAE1 / TsaD family. Fe(2+) is required as a cofactor.

It is found in the cytoplasm. The enzyme catalyses L-threonylcarbamoyladenylate + adenosine(37) in tRNA = N(6)-L-threonylcarbamoyladenosine(37) in tRNA + AMP + H(+). Functionally, required for the formation of a threonylcarbamoyl group on adenosine at position 37 (t(6)A37) in tRNAs that read codons beginning with adenine. Is involved in the transfer of the threonylcarbamoyl moiety of threonylcarbamoyl-AMP (TC-AMP) to the N6 group of A37, together with TsaE and TsaB. TsaD likely plays a direct catalytic role in this reaction. In Streptococcus agalactiae serotype V (strain ATCC BAA-611 / 2603 V/R), this protein is tRNA N6-adenosine threonylcarbamoyltransferase.